Reading from the N-terminus, the 377-residue chain is Palmitoyltransferase ZDHHC16 (377 aa).

Over Met-1–Arg-77 the chain is Cytoplasmic. The chain crosses the membrane as a helical span at residues Trp-78–Ala-98. Topologically, residues Tyr-99–Cys-116 are lumenal. A helical membrane pass occupies residues Trp-117–Ile-137. At Thr-138 to Arg-198 the chain is on the cytoplasmic side. The DHHC domain maps to Ser-155–Phe-205. Cys-185 (S-palmitoyl cysteine intermediate) is an active-site residue. The chain crosses the membrane as a helical span at residues Tyr-199–Trp-219. The Lumenal portion of the chain corresponds to Asp-220–Ser-266. The chain crosses the membrane as a helical span at residues Leu-267–Trp-287. Residues His-288 to Val-377 are Cytoplasmic-facing.

The protein belongs to the DHHC palmitoyltransferase family. In terms of assembly, interacts with ABL1. Interacts with COPS5/JAB1. Widely expressed.

The protein resides in the endoplasmic reticulum membrane. It carries out the reaction L-cysteinyl-[protein] + hexadecanoyl-CoA = S-hexadecanoyl-L-cysteinyl-[protein] + CoA. In terms of biological role, palmitoyl acyltransferase that mediates palmitoylation of proteins such as PLN and ZDHHC6. Required during embryonic heart development and cardiac function, possibly by mediating palmitoylation of PLN, thereby affecting PLN phosphorylation and homooligomerization. Also required for eye development. Palmitoylates ZDHHC6, affecting the quaternary assembly of ZDHHC6, its localization, stability and function. May play a role in DNA damage response. May be involved in apoptosis regulation. Involved in the proliferation of neural stem cells by regulating the FGF/ERK pathway. This Homo sapiens (Human) protein is Palmitoyltransferase ZDHHC16.